We begin with the raw amino-acid sequence, 157 residues long: Endoribonuclease YbeY (157 aa).

His114, His118, and His124 together coordinate Zn(2+).

Belongs to the endoribonuclease YbeY family. Zn(2+) is required as a cofactor.

The protein resides in the cytoplasm. Single strand-specific metallo-endoribonuclease involved in late-stage 70S ribosome quality control and in maturation of the 3' terminus of the 16S rRNA. The chain is Endoribonuclease YbeY from Klebsiella pneumoniae (strain 342).